Here is a 350-residue protein sequence, read N- to C-terminus: Chemokine C-C motif receptor-like 2 (350 aa).

The Extracellular segment spans residues 1-43 (MANYTSAPEDDYDVFIEDDLSNDERELCSPYDPQALLAQLVPY). Residue Asn-3 is glycosylated (N-linked (GlcNAc...) asparagine). Residues 44 to 64 (LFITVFLVGLLDNILVVLIMV) traverse the membrane as a helical segment. At 65 to 74 (KYKGLKQVEN) the chain is on the cytoplasmic side. The chain crosses the membrane as a helical span at residues 75 to 95 (IYLLNLAVCNLCFLCTLPFWV). Residues 96 to 110 (HMAWHEGDPGEPLCK) lie on the Extracellular side of the membrane. Residues Cys-109 and Cys-187 are joined by a disulfide bond. Residues 111–131 (ILLVLYSVGLFSEAFFNVLLT) form a helical membrane-spanning segment. Residues 132–149 (VQRYQKFFQMRGFFSATR) lie on the Cytoplasmic side of the membrane. A helical membrane pass occupies residues 150 to 170 (MVAGSIFPSALVWVIAVLVML). At 171–204 (PELAFYKPQMENQKYKCFFGRPLFLPADETFWKH) the chain is on the extracellular side. Residues 205–225 (FLTLKMNILGFLLPLFVFVFC) form a helical membrane-spanning segment. Topologically, residues 226 to 244 (YVRMRRTLKFGERGYDLFK) are cytoplasmic. Residues 245 to 265 (LVFTIMVVFLLMWGPYNIALF) traverse the membrane as a helical segment. At 266–288 (LSAFNEHFSLHGCESSHNLDRST) the chain is on the extracellular side. A helical transmembrane segment spans residues 289–309 (LITKIIATTHCCVNPLLYVFF). Residues 310-350 (DEAFRKHLYHFCHLCNDTAPQPTEEPAQGTSREEPCLSTKM) are Cytoplasmic-facing. Positions 329-350 (PQPTEEPAQGTSREEPCLSTKM) are disordered.

This sequence belongs to the G-protein coupled receptor 1 family.

The protein resides in the cell membrane. In terms of biological role, receptor for CCL19 and chemerin/RARRES2. Does not appear to be a signaling receptor, but may have a role in modulating chemokine-triggered immune responses by capturing and internalizing CCL19 or by presenting RARRES2 ligand to CMKLR1, a functional signaling receptor. Plays a critical role for the development of Th2 responses. The protein is Chemokine C-C motif receptor-like 2 (CCRL2) of Sus scrofa (Pig).